The primary structure comprises 765 residues: Lysyl oxidase homolog 2 (765 aa).

The signal sequence occupies residues 1 to 19 (MLVSHVFLLTLSLSVPSLG). SRCR domains are found at residues 49–150 (VRLA…VQCS), 179–293 (IRPI…VSCT), 317–416 (VRLR…VRCN), and 426–535 (VRLS…VSCV). 9 cysteine pairs are disulfide-bonded: Cys-75–Cys-139, Cys-88–Cys-149, Cys-119–Cys-129, Cys-209–Cys-282, Cys-222–Cys-292, Cys-256–Cys-266, Cys-342–Cys-405, Cys-355–Cys-415, and Cys-386–Cys-396. A glycan (N-linked (GlcNAc...) asparagine) is linked at Asn-279. An N-linked (GlcNAc...) asparagine glycan is attached at Asn-446. 3 cysteine pairs are disulfide-bonded: Cys-455–Cys-521, Cys-468–Cys-534, and Cys-502–Cys-512. Positions 539 to 742 (PDLVLNAALV…WMYNCHIGGS (204 aa)) are lysyl-oxidase like. Ca(2+)-binding residues include Asp-540 and Leu-541. 4 disulfide bridges follow: Cys-564–Cys-616, Cys-570–Cys-686, Cys-648–Cys-664, and Cys-654–Cys-676. Cu cation-binding residues include His-617, His-619, and His-621. Residue Asn-635 is glycosylated (N-linked (GlcNAc...) asparagine). The segment at residues 644–680 (KASFCLEDSECEADIQKQYVCANFGEQGITVGCWDLY) is a cross-link (lysine tyrosylquinone (Lys-Tyr)). Position 680 is a 2',4',5'-topaquinone (Tyr-680). Residues Glu-713, Asp-715, Asn-718, and Asn-719 each contribute to the Ca(2+) site. Cys-723 and Cys-737 are oxidised to a cystine.

Belongs to the lysyl oxidase family. It depends on Cu cation as a cofactor. The cofactor is lysine tyrosylquinone residue. The lysine tyrosylquinone cross-link (LTQ) is generated by condensation of the epsilon-amino group of a lysine with a topaquinone produced by oxidation of tyrosine.

Its subcellular location is the secreted. The protein localises to the extracellular space. It localises to the extracellular matrix. It is found in the basement membrane. The protein resides in the nucleus. Its subcellular location is the chromosome. The protein localises to the endoplasmic reticulum. The enzyme catalyses L-lysyl-[protein] + O2 + H2O = (S)-2-amino-6-oxohexanoyl-[protein] + H2O2 + NH4(+). Its function is as follows. Mediates the post-translational oxidative deamination of lysine residues on target proteins leading to the formation of deaminated lysine (allysine). Acts as a transcription corepressor and specifically mediates deamination of trimethylated 'Lys-4' of histone H3 (H3K4me3), a specific tag for epigenetic transcriptional activation. Shows no activity against histone H3 when it is trimethylated on 'Lys-9' (H3K9me3) or 'Lys-27' (H3K27me3) or when 'Lys-4' is monomethylated (H3K4me1) or dimethylated (H3K4me2). Also mediates deamination of methylated TAF10, a member of the transcription factor IID (TFIID) complex, which induces release of TAF10 from promoters, leading to inhibition of TFIID-dependent transcription. LOXL2-mediated deamination of TAF10 results in transcriptional repression of genes required for embryonic stem cell pluripotency. Involved in epithelial to mesenchymal transition (EMT) and participates in repression of E-cadherin, probably by mediating deamination of histone H3. When secreted into the extracellular matrix, promotes cross-linking of extracellular matrix proteins by mediating oxidative deamination of peptidyl lysine residues in precursors to fibrous collagen and elastin. Acts as a regulator of sprouting angiogenesis, probably via collagen IV scaffolding. Acts as a regulator of chondrocyte differentiation, probably by regulating expression of factors that control chondrocyte differentiation. The sequence is that of Lysyl oxidase homolog 2 (loxl2) from Xenopus laevis (African clawed frog).